An 822-amino-acid polypeptide reads, in one-letter code: Probable RING finger protein 207 homolog (822 aa).

The RING-type zinc finger occupies Cys8–Ser42. Residues Glu68–Ser115 form a B box-type 1; atypical zinc finger. 4 residues coordinate Zn(2+): Cys73, Cys76, Cys97, and His102. Residues Tyr122–Ile164 form a B box-type 2; degenerate zinc finger. 2 coiled-coil regions span residues Asn526–Ala558 and Asp738–Glu769.

In Caenorhabditis elegans, this protein is Probable RING finger protein 207 homolog.